Here is a 155-residue protein sequence, read N- to C-terminus: MTAQLEGLRIGNGQKHCVIVSKFNEFITESLLKGAKDAYRQHGVAESDVTVIYVPGAFELPQTVKRVLGSKKYQFSAIVCLGAVIRGATSHYDLVSGEAAKVGSVADGSVPVIFGVITTESIEQAIERAGTKAGNKGYEAATTAIEMANLFKEIG.

Residues F23, 57 to 59 (AFE), and 83 to 85 (AVI) each bind 5-amino-6-(D-ribitylamino)uracil. Position 88-89 (88-89 (AT)) interacts with (2S)-2-hydroxy-3-oxobutyl phosphate. H91 acts as the Proton donor in catalysis. A 5-amino-6-(D-ribitylamino)uracil-binding site is contributed by F114. R128 is a (2S)-2-hydroxy-3-oxobutyl phosphate binding site.

Belongs to the DMRL synthase family.

The catalysed reaction is (2S)-2-hydroxy-3-oxobutyl phosphate + 5-amino-6-(D-ribitylamino)uracil = 6,7-dimethyl-8-(1-D-ribityl)lumazine + phosphate + 2 H2O + H(+). It functions in the pathway cofactor biosynthesis; riboflavin biosynthesis; riboflavin from 2-hydroxy-3-oxobutyl phosphate and 5-amino-6-(D-ribitylamino)uracil: step 1/2. Its function is as follows. Catalyzes the formation of 6,7-dimethyl-8-ribityllumazine by condensation of 5-amino-6-(D-ribitylamino)uracil with 3,4-dihydroxy-2-butanone 4-phosphate. This is the penultimate step in the biosynthesis of riboflavin. This is 6,7-dimethyl-8-ribityllumazine synthase from Leptospira biflexa serovar Patoc (strain Patoc 1 / Ames).